The primary structure comprises 1651 residues: MEGSLAGSLAAPDRPQGPERLPGPAPRENIEGGAEAAEGEGGIFRSTRYLPVTKEGPRDILDGRGGISGTPDGRGPWEHPLVQEAGEGILSERRFEDSVIVRTMKPHAELEGSRRFLHHRGEPRLLEKHAQGRPRFDWLQDEDEQGSPQDAGLHLDLPAQPPPLAPFRRVFVPVEDTPKTLDMAVVGGREDLEDLEGLAQPSEWGLPTSASEVATQTWTVNSEASVERLQPLLPPIRTGPYLCELLEEVAEGVASPDEDEDEEPAVFPCIECSIYFKQKEHLLEHMSQHRRAPGQEPPADLAPLACGECGWAFADPTALEQHRQLHQASREKIIEEIQKLKQVPGDEGREARLQCPKCVFGTNSSRAYVQHAKLHMREPPGQTTKEPFGGSSGAGSPSPEASALLYQPYGAAVGLSACVFCGFPAPSESLLREHVRLVHAHPHWEEDGEAYEEDPASQPGTSQDAHACFPDTAVDYFGKAEPSLAPMWRENPAGYDPSLAFGPGCQQLSIRDFPLSKPLLHGTGQRPLGRLAFPSTLASTPYSLQLGRNKSTVHPQGLGERRRPWSEEEEEEEEEEDVVLTSEMDFSPENGVFSPLATPSLIPQAALELKQAFREALQAVEATQGQQQQLRGMVPIVLVAKLGPQVMAAARVPPRLQPEELGLAGAHPLDFLLLDAPLGGPLGLDTLLDGDPAMALKHEERKCPYCPDRFHNGIGLANHVRGHLNRVGVSYNVRHFISAEEVKAIERRFSFQKKKKKVANFDPGTFSLMRCDFCGAGFDTRAGLSSHARAHLRDFGITNWELTVSPINILQELLATSAAEQPPSPLGREPGGPPGSFLTSRRPRLPLTVPFPPTWAEDPGPAYGDAQSLTTCEVCGACFETRKGLSSHARSHLRQLGVAESESSGAPIDLLYELVKQKGLPDAHLGLPPGLAKKSSSLKEVVAGAPRPGLLSLAKPLDAPAVNKAIKSPPGFSAKGLGHPPSSPLLKKTPLALAGSPTPKNPEDKSPQLSLSPRPASPKAQWPQSEDEGPLNLTSGPEPARDIRCEFCGEFFENRKGLSSHARSHLRQMGVTEWYVNGSPIDTLREILKRRTQSRPGGPPNPPGPSPKALAKMMGGAGPGSSLEARSPSDLHISPLAKKLPPPPGSPLGHSPTASPPPTARKMFPGLAAPSLPKKLKPEQIRVEIKREMLPGALHGELHPSEGPWGAPREDMTPLNLSSRAEPVRDIRCEFCGEFFENRKGLSSHARSHLRQMGVTEWSVNGSPIDTLREILKKKSKPCLIKKEPPAGDLAPALAEDGPPTVAPGPVQSPLPLSPLAGRPGKPGAGPAQVPRELSLTPITGAKPSATGYLGSVAAKRPLQEDRLLPAEVKAKTYIQTELPFKAKTLHEKTSHSSTEACCELCGLYFENRKALASHARAHLRQFGVTEWCVNGSPIETLSEWIKHRPQKVGAYRSYIQGGRPFTKKFRSAGHGRDSDKRPSLGLAPGGLAVVGRSAGGEPGPEAGRAADGGERPLAASPPGTVKAEEHQRQNINKFERRQARPPDASAARGGEDTNDLQQKLEEVRQPPPRVRPVPSLVPRPPQTSLVKFVGNIYTLKCRFCEVEFQGPLSIQEEWVRHLQRHILEMNFSKADPPPEESQAPQAQTAAAEAP.

Residues 1 to 79 (MEGSLAGSLA…TPDGRGPWEH (79 aa)) are disordered. Glycyl lysine isopeptide (Lys-Gly) (interchain with G-Cter in SUMO2) cross-links involve residues Ala11, Arg14, Asn29, Gly32, Gly39, Gly42, and Glu258. C2H2-type zinc fingers lie at residues 267-289 (FPCIECSIYFKQKEHLLEHMSQH), 304-326 (LACGECGWAFADPTALEQHRQLH), and 353-375 (LQCPKCVFGTNSSRAYVQHAKLH). A Glycyl lysine isopeptide (Lys-Gly) (interchain with G-Cter in SUMO2) cross-link involves residue Phe313. The segment at 376 to 399 (MREPPGQTTKEPFGGSSGAGSPSP) is disordered. Positions 386 to 399 (EPFGGSSGAGSPSP) are enriched in low complexity. The C2H2-type 4 zinc finger occupies 416–439 (SACVFCGFPAPSESLLREHVRLVH). Residues 546–578 (LGRNKSTVHPQGLGERRRPWSEEEEEEEEEEDV) are disordered. Residues 567 to 578 (EEEEEEEEEEDV) are compositionally biased toward acidic residues. C2H2-type zinc fingers lie at residues 701 to 723 (RKCPYCPDRFHNGIGLANHVRGH) and 769 to 791 (MRCDFCGAGFDTRAGLSSHARAH). The disordered stretch occupies residues 819-843 (AEQPPSPLGREPGGPPGSFLTSRRP). Residues 870–892 (TTCEVCGACFETRKGLSSHARSH) form a C2H2-type 7 zinc finger. Residues Lys883, Lys939, Lys955, Lys967, and Lys988 each participate in a glycyl lysine isopeptide (Lys-Gly) (interchain with G-Cter in SUMO2) cross-link. The tract at residues 972-1038 (FSAKGLGHPP…GPLNLTSGPE (67 aa)) is disordered. Residues 984–994 (PLLKKTPLALA) show a composition bias toward low complexity. The residue at position 996 (Ser996) is a Phosphoserine. Thr998 is modified (phosphothreonine). Glycyl lysine isopeptide (Lys-Gly) (interchain with G-Cter in SUMO2) cross-links involve residues Lys1000 and Lys1005. Phosphoserine is present on residues Ser1006, Ser1012, Ser1017, and Ser1025. The interval 1030–1034 (PLNLT) is interaction with CTBP1 and CTBP2 1. The C2H2-type 8 zinc finger occupies 1043 to 1065 (IRCEFCGEFFENRKGLSSHARSH). Residue Lys1056 forms a Glycyl lysine isopeptide (Lys-Gly) (interchain with G-Cter in SUMO2) linkage. Residues Ser1079 and Ser1106 each carry the phosphoserine modification. The tract at residues 1091-1174 (RTQSRPGGPP…PGLAAPSLPK (84 aa)) is disordered. A compositionally biased stretch (pro residues) spans 1097-1106 (GGPPNPPGPS). Glycyl lysine isopeptide (Lys-Gly) (interchain with G-Cter in SUMO2) cross-links involve residues Lys1108 and Lys1112. 3 positions are modified to phosphoserine: Ser1122, Ser1127, and Ser1134. Residues Lys1138 and Lys1139 each participate in a glycyl lysine isopeptide (Lys-Gly) (interchain with G-Cter in SUMO2) cross-link. A phosphoserine mark is found at Ser1146 and Ser1151. Lys1162 is subject to N6,N6,N6-trimethyllysine; by EHMT2; alternate. The residue at position 1162 (Lys1162) is an N6,N6-dimethyllysine; by EHMT2; alternate. A Glycyl lysine isopeptide (Lys-Gly) (interchain with G-Cter in SUMO2) cross-link involves residue Lys1177. The interaction with CTBP1 and CTBP2 2 stretch occupies residues 1214–1218 (PLNLS). The C2H2-type 9 zinc-finger motif lies at 1227 to 1249 (IRCEFCGEFFENRKGLSSHARSH). Lys1240 participates in a covalent cross-link: Glycyl lysine isopeptide (Lys-Gly) (interchain with G-Cter in SUMO2). Phosphoserine is present on Ser1263. A Glycyl lysine isopeptide (Lys-Gly) (interchain with G-Cter in SUMO2) cross-link involves residue Lys1282. Residues 1283–1331 (KEPPAGDLAPALAEDGPPTVAPGPVQSPLPLSPLAGRPGKPGAGPAQVP) are disordered. The segment covering 1301 to 1313 (TVAPGPVQSPLPL) has biased composition (pro residues). Ser1309 and Ser1314 each carry phosphoserine. Over residues 1315 to 1328 (PLAGRPGKPGAGPA) the composition is skewed to low complexity. Glycyl lysine isopeptide (Lys-Gly) (interchain with G-Cter in SUMO2) cross-links involve residues Lys1343, Lys1356, Lys1370, Lys1372, and Lys1382. A C2H2-type 10 zinc finger spans residues 1397-1419 (ACCELCGLYFENRKALASHARAH). Glycyl lysine isopeptide (Lys-Gly) (interchain with G-Cter in SUMO2) cross-links involve residues Lys1448, Lys1464, and Lys1477. Residues 1463-1554 (TKKFRSAGHG…ASAARGGEDT (92 aa)) are disordered. Ser1480 is modified (phosphoserine). The segment covering 1481–1493 (LGLAPGGLAVVGR) has biased composition (low complexity). Position 1517 is a phosphoserine (Ser1517). Lys1523 is covalently cross-linked (Glycyl lysine isopeptide (Lys-Gly) (interchain with G-Cter in SUMO1); alternate). A Glycyl lysine isopeptide (Lys-Gly) (interchain with G-Cter in SUMO2); alternate cross-link involves residue Lys1523. Positions 1523–1541 (KAEEHQRQNINKFERRQAR) are enriched in basic and acidic residues. Glycyl lysine isopeptide (Lys-Gly) (interchain with G-Cter in SUMO2) cross-links involve residues Lys1534 and Lys1560. Residues 1596-1622 (LKCRFCEVEFQGPLSIQEEWVRHLQRH) form a C2H2-type 11 zinc finger. A disordered region spans residues 1629 to 1651 (SKADPPPEESQAPQAQTAAAEAP). Lys1630 participates in a covalent cross-link: Glycyl lysine isopeptide (Lys-Gly) (interchain with G-Cter in SUMO2). Residues 1637–1651 (ESQAPQAQTAAAEAP) are compositionally biased toward low complexity.

This sequence belongs to the krueppel C2H2-type zinc-finger protein family. As to quaternary structure, interacts with EHMT1, EHMT2, CTBP1 and CTBP2. Part of a complex containing at least CDYL, REST, WIZ, SETB1, EHMT1 and EHMT2.

It localises to the nucleus. May link EHMT1 and EHMT2 histone methyltransferases to the CTBP corepressor machinery. May be involved in EHMT1-EHMT2 heterodimer formation and stabilization. This Homo sapiens (Human) protein is Protein Wiz (WIZ).